We begin with the raw amino-acid sequence, 281 residues long: Sulfur carrier protein FdhD (281 aa).

The active-site Cysteine persulfide intermediate is the cysteine 117.

It belongs to the FdhD family.

The protein resides in the cytoplasm. Functionally, required for formate dehydrogenase (FDH) activity. Acts as a sulfur carrier protein that transfers sulfur from IscS to the molybdenum cofactor prior to its insertion into FDH. This is Sulfur carrier protein FdhD from Xanthomonas oryzae pv. oryzae (strain MAFF 311018).